Consider the following 382-residue polypeptide: Telomere-binding protein OPG082 (382 aa).

This sequence belongs to the orthopoxvirus OPG082 family.

Its subcellular location is the virion. Binds to the hairpin form of the viral telomeric sequence. Might direct genome encapsidation into the virus particle. The polypeptide is Telomere-binding protein OPG082 (OPG082) (Variola virus (isolate Human/India/Ind3/1967) (VARV)).